We begin with the raw amino-acid sequence, 61 residues long: Delta-actitoxin-Avd2c (61 aa).

The first 20 residues, 1-20, serve as a signal peptide directing secretion; sequence MMNRLLVFLMLGAFMLVVSA. Residues 21–31 constitute a propeptide that is removed on maturation; that stretch reads NDAYGGDESLG. 3 disulfides stabilise this stretch: C36–C51, C37–C45, and C39–C56.

The protein belongs to the sea anemone short toxin (type III) family.

Its subcellular location is the secreted. The protein resides in the nematocyst. Its function is as follows. Sodium channel inhibitor. 5 uM completely inhibits voltage-gated sodium channel (Nav) inactivation. This chain is Delta-actitoxin-Avd2c, found in Anemonia viridis (Snakelocks anemone).